Consider the following 190-residue polypeptide: Major sperm protein 32 (190 aa).

The 118-residue stretch at 72-189 (MIQTQPGTKI…RRKNLPIEYN (118 aa)) folds into the MSP domain.

As to expression, sperm.

Its subcellular location is the cell projection. The protein resides in the pseudopodium. The protein localises to the cytoplasm. It localises to the cytoskeleton. Functionally, central component in molecular interactions underlying sperm crawling. Forms an extensive filament system that extends from sperm villipoda, along the leading edge of the pseudopod. In Caenorhabditis elegans, this protein is Major sperm protein 32 (msp-32).